Reading from the N-terminus, the 372-residue chain is NADH-quinone oxidoreductase subunit H (372 aa).

Helical transmembrane passes span 34–54 (LPLG…LYAL), 106–126 (FLFV…FAVL), 139–159 (VGLF…LAAG), 178–198 (IVSY…MAGT), 217–237 (FFLF…IASL), 269–289 (VIFL…AIVF), 313–333 (VWGA…QMWL), and 352–372 (VLTP…IYVP).

It belongs to the complex I subunit 1 family. NDH-1 is composed of 14 different subunits. Subunits NuoA, H, J, K, L, M, N constitute the membrane sector of the complex.

The protein localises to the cell inner membrane. It carries out the reaction a quinone + NADH + 5 H(+)(in) = a quinol + NAD(+) + 4 H(+)(out). In terms of biological role, NDH-1 shuttles electrons from NADH, via FMN and iron-sulfur (Fe-S) centers, to quinones in the respiratory chain. The immediate electron acceptor for the enzyme in this species is believed to be ubiquinone. Couples the redox reaction to proton translocation (for every two electrons transferred, four hydrogen ions are translocated across the cytoplasmic membrane), and thus conserves the redox energy in a proton gradient. This subunit may bind ubiquinone. The protein is NADH-quinone oxidoreductase subunit H of Chlorobium luteolum (strain DSM 273 / BCRC 81028 / 2530) (Pelodictyon luteolum).